The primary structure comprises 108 residues: ATP synthase subunit H, mitochondrial (108 aa).

The N-terminal 19 residues, 1–19, are a transit peptide targeting the mitochondrion; sequence MFTLRAASRRAFSTSIARR. Disordered regions lie at residues 40–60 and 75–108; these read AKDAEGQVKPWSAPSAPKPPV and APVDVEGQTNSKSASPQANDEDWLAFEEEEGVAV. A compositionally biased stretch (low complexity) spans 47–60; it reads VKPWSAPSAPKPPV. Residues 81 to 92 are compositionally biased toward polar residues; sequence GQTNSKSASPQA. Residues 93–108 show a composition bias toward acidic residues; sequence NDEDWLAFEEEEGVAV.

F-type ATP synthases have 2 components, the catalytic core F(1) and the membrane-embedded component F(0), linked together by a central stalk and a peripheral stalk. The central stalk, also called rotor shaft, is often seen as part of F(1). The peripheral stalk is seen as part of F(0). F(0) contains the membrane channel next to the rotor. F-type ATP synthases form dimers but each monomer functions independently in ATP generation. The dimer consists of 17 different polypeptides: ATP1 (subunit alpha, 3 molecules per monomer, part of F(1)), ATP2 (subunit beta, 3 copies per monomer, part of F(1)), ATP3 (subunit gamma, part of the central stalk), ATP4 (subunit b, part of the peripheral stalk), ATP5/OSCP (subunit 5/OSCP, part of the peripheral stalk), ATP6 (subunit a, part of the peripheral stalk), ATP7 (subunit d, part of the peripheral stalk), ATP8 (subunit 8, part of the peripheral stalk), OLI1 (subunit c, part of the rotor, 10 molecules per monomer), ATP14 (subunit H, part of the peripheral stalk), ATP15 (subunit epsilon, part of the central stalk), ATP16 (subunit delta, part of the central stalk), ATP17 (subunit f, part of the peripheral stalk), ATP18 (subunit i/j, part of the peripheral stalk), ATP19 (subunit k, dimer-specific, at interface between monomers), ATP20 (subunit g, at interface between monomers), TIM11 (subunit e, at interface between monomers).

It localises to the mitochondrion inner membrane. Mitochondrial membrane ATP synthase (F(1)F(0) ATP synthase or Complex V) produces ATP from ADP in the presence of a proton gradient across the membrane which is generated by electron transport complexes of the respiratory chain. F-type ATP synthases consist of two structural domains, F(1) - containing the extramembraneous catalytic core, and F(0) - containing the membrane proton channel, linked together by a central stalk and a peripheral stalk. During catalysis, ATP synthesis in the catalytic domain of F(1) is coupled via a rotary mechanism of the central stalk subunits to proton translocation. Part of the peripheral stalk. The chain is ATP synthase subunit H, mitochondrial from Yarrowia lipolytica (strain CLIB 122 / E 150) (Yeast).